Reading from the N-terminus, the 477-residue chain is Polyketide synthase-related protein Dhc1 (477 aa).

The 79-residue stretch at 34–112 (EKMTVREGEL…AMTHCVFDRA (79 aa)) folds into the Carrier domain. At serine 72 the chain carries O-(pantetheine 4'-phosphoryl)serine. The ketoreductase (KR) domain stretch occupies residues 161-322 (LTGATSFLGS…AGEVFLENLV (162 aa)). Residues 410 to 435 (VQQQQQQQQRQSQPPRDDAADGSPTE) form a disordered region. Positions 411 to 422 (QQQQQQQQRQSQ) are enriched in low complexity. Residues 424 to 435 (PRDDAADGSPTE) show a composition bias toward basic and acidic residues.

It functions in the pathway mycotoxin biosynthesis. Functionally, polyketide synthase-related protein; part of the gene cluster that mediates the biosynthesis of 10,11-dehydrocurvularin, a prevalent fungal phytotoxin with heat shock response and immune-modulatory activities. The highly reducing polyketide synthase Dhc3 is responsible for biosynthesis up to the tetraketide stage. The non-reducing polyketide synthase Dhc5 then conducts four additional chain extension cycles, producing the unreduced part of the nascent octaketide from C-1 to C-8 in 10,11-dehydrocurvularin. The role of Dhc1 in 10,11-dehydrocurvularin biosynthesis has not been identified yet. The chain is Polyketide synthase-related protein Dhc1 from Alternaria cinerariae.